The chain runs to 344 residues: Tripartite motif-containing protein 44 (344 aa).

2 disordered regions span residues M1–E25 and A66–P165. The span at G75 to E92 shows a compositional bias: basic and acidic residues. Residues S93 to P165 show a composition bias toward acidic residues. The B box-type zinc-finger motif lies at V174 to L215. Zn(2+)-binding residues include C179, H182, C201, and H207. A coiled-coil region spans residues A290–E325. The segment at Q309–T344 is disordered. Positions G330 to T344 are enriched in acidic residues. Phosphoserine is present on residues S336 and S339.

As to quaternary structure, interacts (via coiled coil) with TRIM17 (via coiled coil). Highly expressed in testis.

May play a role in the process of differentiation and maturation of neuronal cells. May regulate the activity of TRIM17. Is a negative regulator of PAX6 expression. The chain is Tripartite motif-containing protein 44 (TRIM44) from Homo sapiens (Human).